Reading from the N-terminus, the 546-residue chain is DNA ligase (546 aa).

ATP is bound at residue Glu244. The N6-AMP-lysine intermediate role is filled by Lys246. Residues Arg251, Arg266, Glu295, Phe334, Arg405, and Lys411 each coordinate ATP.

The protein belongs to the ATP-dependent DNA ligase family. The cofactor is Mg(2+).

It carries out the reaction ATP + (deoxyribonucleotide)n-3'-hydroxyl + 5'-phospho-(deoxyribonucleotide)m = (deoxyribonucleotide)n+m + AMP + diphosphate.. Its function is as follows. DNA ligase that seals nicks in double-stranded DNA during DNA replication, DNA recombination and DNA repair. The chain is DNA ligase from Methanocorpusculum labreanum (strain ATCC 43576 / DSM 4855 / Z).